Reading from the N-terminus, the 345-residue chain is Linoleate 10R-lipoxygenase COP4 (345 aa).

Mg(2+) contacts are provided by Asp-87, Asp-91, Asn-222, Ser-226, and Glu-230. Positions 87–91 match the DDXXD motif motif; that stretch reads DEISD.

It belongs to the terpene synthase family. The cofactor is Mg(2+).

The enzyme catalyses (2E,6E)-farnesyl diphosphate + H2O = cubebol + diphosphate. It carries out the reaction (2E,6E)-farnesyl diphosphate = beta-copaene + diphosphate. The catalysed reaction is (2E,6E)-farnesyl diphosphate = beta-cubebene + diphosphate. It catalyses the reaction (2E,6E)-farnesyl diphosphate = (+)-sativene + diphosphate. Sesquiterpene synthase that catalyzes the cyclization of farnesyl diphosphate (FPP) into multiple products, including germacrene D, beta-copaene, beta-cubebene, (+)-sativene and cubebol, a natural sesquiterpene alcohol used in the food industry for its cooling and refreshing taste. Terpenoid hydrocarbons resulting from cyclization of farnesyl diphosphate are intermediates in the biosynthesis of biologically active compounds such as antibiotics, toxins and pheromones. The chain is Linoleate 10R-lipoxygenase COP4 (COP4) from Coprinopsis cinerea (strain Okayama-7 / 130 / ATCC MYA-4618 / FGSC 9003) (Inky cap fungus).